Reading from the N-terminus, the 218-residue chain is Casparian strip membrane protein 5 (218 aa).

The disordered stretch occupies residues 1 to 26 (MDSGKEGEAPAATSSPESRRTRSNGK). Topologically, residues 1–58 (MDSGKEGEAPAATSSPESRRTRSNGKVKAFADAAPPSATVVSTKATPLPRGGWKKGVA) are cytoplasmic. The helical transmembrane segment at 59–79 (ILDFIIRLGAIGSALGAAAIM) threads the bilayer. Residues 80–106 (GNSEQILPFFTQFFQFHAQWDDFPMFQ) are Extracellular-facing. The chain crosses the membrane as a helical span at residues 107 to 127 (FFVFANGAAGGFLILSLPFSI). The Cytoplasmic segment spans residues 128 to 139 (VCIVRPYTVGPR). The helical transmembrane segment at 140–160 (LLLVILDILMMALVMAAASSA) threads the bilayer. The Extracellular portion of the chain corresponds to 161–192 (AAVVYLAHNGSQDANWIAICQQFTDFCQVTSE). An N-linked (GlcNAc...) asparagine glycan is attached at Asn169. A helical transmembrane segment spans residues 193–213 (AVVASFVAAFLLICLIVVSSV). At 214-218 (ALKRG) the chain is on the cytoplasmic side.

It belongs to the Casparian strip membrane proteins (CASP) family. In terms of assembly, homodimer and heterodimers.

The protein localises to the cell membrane. Regulates membrane-cell wall junctions and localized cell wall deposition. Required for establishment of the Casparian strip membrane domain (CSD) and the subsequent formation of Casparian strips, a cell wall modification of the root endodermis that determines an apoplastic barrier between the intraorganismal apoplasm and the extraorganismal apoplasm and prevents lateral diffusion. The protein is Casparian strip membrane protein 5 of Glycine max (Soybean).